We begin with the raw amino-acid sequence, 527 residues long: UDP-glucuronosyltransferase 2A1 (527 aa).

The N-terminal stretch at 1–20 (MLNNLLLFSLQISLIGTTLG) is a signal peptide. Over 21 to 491 (GNVLIWPMEG…TWFQYHSLDV (471 aa)) the chain is Lumenal. N-linked (GlcNAc...) asparagine glycans are attached at residues asparagine 49, leucine 313, and asparagine 347. Residues 492 to 512 (IGFLLVCVTTAIFLVIQCCLF) form a helical membrane-spanning segment. Over 513-527 (SCQKFGKIGKKKKRE) the chain is Cytoplasmic.

Belongs to the UDP-glycosyltransferase family. As to expression, olfactory epithelium, brain and fetal lung. Not present in liver.

It localises to the membrane. The protein localises to the endoplasmic reticulum membrane. The catalysed reaction is glucuronate acceptor + UDP-alpha-D-glucuronate = acceptor beta-D-glucuronoside + UDP + H(+). It carries out the reaction 16beta,17beta-estriol + UDP-alpha-D-glucuronate = 16beta,17beta-estriol 16-O-(beta-D-glucuronate) + UDP + H(+). The enzyme catalyses 16alpha,17alpha-estriol + UDP-alpha-D-glucuronate = 16alpha,17alpha-estriol 16-O-(beta-D-glucuronate) + UDP + H(+). It catalyses the reaction 17alpha-estradiol + UDP-alpha-D-glucuronate = 17alpha-estradiol 17-O-(beta-D-glucuronate) + UDP + H(+). The catalysed reaction is 17alpha-estradiol + UDP-alpha-D-glucuronate = 17alpha-estradiol 3-O-(beta-D-glucuronate) + UDP + H(+). It carries out the reaction 17beta-estradiol + UDP-alpha-D-glucuronate = 17beta-estradiol 3-O-(beta-D-glucuronate) + UDP + H(+). The enzyme catalyses 17beta-estradiol + UDP-alpha-D-glucuronate = 17beta-estradiol 17-O-(beta-D-glucuronate) + UDP + H(+). It catalyses the reaction testosterone + UDP-alpha-D-glucuronate = testosterone 17-O-(beta-D-glucuronate) + UDP + H(+). The catalysed reaction is epitestosterone + UDP-alpha-D-glucuronate = epitestosterone 17-O-(beta-D-glucuronate) + UDP + H(+). It carries out the reaction lithocholate + UDP-alpha-D-glucuronate = lithocholoyl-3-O-(beta-D-glucuronate) + UDP + H(+). The enzyme catalyses lithocholate + UDP-alpha-D-glucuronate = lithocholoyl-24-O-(beta-D-glucuronate) + UDP. It catalyses the reaction deoxycholate + UDP-alpha-D-glucuronate = deoxycholoyl-24-O-(beta-D-glucuronate) + UDP. The catalysed reaction is hyodeoxycholate + UDP-alpha-D-glucuronate = hyodeoxycholoyl-24-O-(beta-D-glucuronate) + UDP. It carries out the reaction hyocholate + UDP-alpha-D-glucuronate = hyocholoyl-24-O-(beta-D-glucuronate) + UDP. Functionally, UDP-glucuronosyltransferase (UGT) that catalyzes phase II biotransformation reactions in which lipophilic substrates are conjugated with glucuronic acid to increase the metabolite's water solubility, thereby facilitating excretion into either the urine or bile. Essential for the elimination and detoxification of drugs, xenobiotics and endogenous compounds. Catalyzes the glucuronidation of endogenous steroid hormones such as androgens (testosterone and epitestosterone) and estrogens (estradiol and epiestriol). Contributes to bile acid (BA) detoxification by catalyzing the glucuronidation of BA substrates, which are natural detergents for dietary lipids absorption. Shows a high affinity to aliphatic odorants such as citronellol as well as olfactory tissue specificity, and therefore may be involved in olfaction. Shows a potential role in detoxification of toxic waste compounds in the amniotic fluid before birth, and air-born chemical after birth. In Homo sapiens (Human), this protein is UDP-glucuronosyltransferase 2A1.